Reading from the N-terminus, the 424-residue chain is Enolase (424 aa).

Residue glutamine 162 participates in (2R)-2-phosphoglycerate binding. Glutamate 204 (proton donor) is an active-site residue. Positions 241, 284, and 311 each coordinate Mg(2+). Lysine 336, arginine 365, serine 366, and lysine 387 together coordinate (2R)-2-phosphoglycerate. Lysine 336 serves as the catalytic Proton acceptor.

It belongs to the enolase family. Requires Mg(2+) as cofactor.

The protein localises to the cytoplasm. It is found in the secreted. The protein resides in the cell surface. The catalysed reaction is (2R)-2-phosphoglycerate = phosphoenolpyruvate + H2O. It functions in the pathway carbohydrate degradation; glycolysis; pyruvate from D-glyceraldehyde 3-phosphate: step 4/5. In terms of biological role, catalyzes the reversible conversion of 2-phosphoglycerate (2-PG) into phosphoenolpyruvate (PEP). It is essential for the degradation of carbohydrates via glycolysis. In Rhizobium johnstonii (strain DSM 114642 / LMG 32736 / 3841) (Rhizobium leguminosarum bv. viciae), this protein is Enolase.